A 469-amino-acid polypeptide reads, in one-letter code: 2-oxoisovalerate dehydrogenase subunit beta, mitochondrial (469 aa).

A mitochondrion-targeting transit peptide spans methionine 1 to tyrosine 40. Residue tyrosine 167 coordinates thiamine diphosphate. Glycine 194, leucine 196, and threonine 197 together coordinate K(+).

Heterotetramer of 2 alpha and 2 beta chains. The cofactor is thiamine diphosphate.

Its subcellular location is the mitochondrion matrix. It catalyses the reaction N(6)-[(R)-lipoyl]-L-lysyl-[protein] + 3-methyl-2-oxobutanoate + H(+) = N(6)-[(R)-S(8)-2-methylpropanoyldihydrolipoyl]-L-lysyl-[protein] + CO2. Its function is as follows. The branched-chain alpha-keto dehydrogenase complex catalyzes the overall conversion of alpha-keto acids to acyl-CoA and CO(2). It contains multiple copies of three enzymatic components: branched-chain alpha-keto acid decarboxylase (E1), lipoamide acyltransferase (E2) and lipoamide dehydrogenase (E3). In Chaetomium thermophilum (strain DSM 1495 / CBS 144.50 / IMI 039719) (Thermochaetoides thermophila), this protein is 2-oxoisovalerate dehydrogenase subunit beta, mitochondrial.